The following is a 158-amino-acid chain: Small ribosomal subunit protein uS7c (158 aa).

Belongs to the universal ribosomal protein uS7 family. Part of the 30S ribosomal subunit.

Its subcellular location is the plastid. The protein localises to the chloroplast. In terms of biological role, one of the primary rRNA binding proteins, it binds directly to 16S rRNA where it nucleates assembly of the head domain of the 30S subunit. The polypeptide is Small ribosomal subunit protein uS7c (rps7) (Trieres chinensis (Marine centric diatom)).